Consider the following 494-residue polypeptide: NADH-quinone oxidoreductase subunit N 2 (494 aa).

14 consecutive transmembrane segments (helical) span residues 14 to 34, 45 to 65, 82 to 102, 116 to 136, 139 to 159, 174 to 194, 214 to 234, 262 to 282, 289 to 309, 317 to 337, 344 to 364, 388 to 408, 422 to 442, and 470 to 490; these read LPQI…GMLL, IAML…PLTA, VVQV…GSVL, IGEF…LVST, LLLI…LTAF, FLFG…LYGV, LLVA…AAPF, FFVF…NAAW, WMPI…LAAL, LLAY…IAHT, LLYY…VLAI, ACLL…GFFA, AFGL…ALFY, and ITLL…NLLM.

It belongs to the complex I subunit 2 family. As to quaternary structure, NDH-1 is composed of 14 different subunits. Subunits NuoA, H, J, K, L, M, N constitute the membrane sector of the complex.

It is found in the cell inner membrane. It catalyses the reaction a quinone + NADH + 5 H(+)(in) = a quinol + NAD(+) + 4 H(+)(out). Its function is as follows. NDH-1 shuttles electrons from NADH, via FMN and iron-sulfur (Fe-S) centers, to quinones in the respiratory chain. The immediate electron acceptor for the enzyme in this species is believed to be ubiquinone. Couples the redox reaction to proton translocation (for every two electrons transferred, four hydrogen ions are translocated across the cytoplasmic membrane), and thus conserves the redox energy in a proton gradient. The chain is NADH-quinone oxidoreductase subunit N 2 from Acidobacterium capsulatum (strain ATCC 51196 / DSM 11244 / BCRC 80197 / JCM 7670 / NBRC 15755 / NCIMB 13165 / 161).